Here is a 242-residue protein sequence, read N- to C-terminus: E3 ubiquitin-protein ligase AIRP2 (242 aa).

The RING-type zinc finger occupies 146–184 (CGICLEIRNKVVLPTCNHSMCINCYRNWRARSQSCPFCR).

As to quaternary structure, interacts with ATP1/SDIRIP1. Expressed in germinating seeds, flower organs and siliques.

The protein localises to the cytoplasm. It is found in the cytosol. It carries out the reaction S-ubiquitinyl-[E2 ubiquitin-conjugating enzyme]-L-cysteine + [acceptor protein]-L-lysine = [E2 ubiquitin-conjugating enzyme]-L-cysteine + N(6)-ubiquitinyl-[acceptor protein]-L-lysine.. In terms of biological role, possesses E3 ubiquitin-protein ligase activity in vitro when associated with the E2 enzyme UBC8 in vitro. Plays combinatory roles with AIRP1 in the positive regulation of the abscisic acid-mediated drought stress response. Plays a positive role in abscisic acid- and high salinity-regulated seed germination through the ubiquitin-proteasome-dependent down-regulation of ATP1/SDIRIP1. The sequence is that of E3 ubiquitin-protein ligase AIRP2 from Arabidopsis thaliana (Mouse-ear cress).